Consider the following 901-residue polypeptide: Sperm-associated antigen 1 (901 aa).

TPR repeat units lie at residues 213–246 (ANREKGKGNEAFYSGDYEEAVMYYTRSLSALPTA), 247–279 (IAYNNRAQAEIKLQRWSSALEDCEKALELDPGN), and 280–313 (VKALLRRATTYKHQNKLQEAVDDLRKVLQVEPDN). A disordered region spans residues 322–437 (EVERDLKNSE…DNPSGLKRRG (116 aa)). Phosphoserine occurs at positions 351 and 359. TPR repeat units follow at residues 430–464 (PSGLKRRGNELFRGGQFAEAAAQYSVAIAQLEPTG), 472–505 (SILYSNRAACYLKEGNCRDCIQDCNRALELHPFS), 507–539 (KPLLRRAMAYETLEQYRNAYVDYKTVLQIDCGI), 606–639 (FQALKEEGNQLVKDKNYKDAISKYNECLKINSKA), and 640–673 (CAIYTNRALCYLKLGQFEEAKLDCEQALQIDGEN). The disordered stretch occupies residues 694–776 (GVDPSQVLLS…AEPAEKLDVS (83 aa)). Phosphoserine is present on Ser-703. The segment covering 708–717 (EAARHLDTKN) has biased composition (basic and acidic residues). Residues Ser-739 and Ser-740 each carry the phosphoserine modification. 756–763 (PARDGVED) is a GTP binding site. Ser-766 bears the Phosphoserine mark.

Detected in cerebellum, tongue, esophagus, forestomach, sperm and testis.

It is found in the cytoplasm. It localises to the dynein axonemal particle. In terms of biological role, may play a role in the cytoplasmic assembly of the ciliary dynein arms. May play a role in fertilization. Binds GTP and has GTPase activity. In Mus musculus (Mouse), this protein is Sperm-associated antigen 1 (Spag1).